Reading from the N-terminus, the 334-residue chain is Uroporphyrinogen decarboxylase (334 aa).

Residues 22-26 (RQVGR), aspartate 71, tyrosine 140, serine 195, and histidine 310 each bind substrate.

This sequence belongs to the uroporphyrinogen decarboxylase family. As to quaternary structure, homodimer.

It is found in the cytoplasm. It carries out the reaction uroporphyrinogen III + 4 H(+) = coproporphyrinogen III + 4 CO2. It participates in porphyrin-containing compound metabolism; protoporphyrin-IX biosynthesis; coproporphyrinogen-III from 5-aminolevulinate: step 4/4. In terms of biological role, catalyzes the decarboxylation of four acetate groups of uroporphyrinogen-III to yield coproporphyrinogen-III. The sequence is that of Uroporphyrinogen decarboxylase from Chlamydia muridarum (strain MoPn / Nigg).